Consider the following 364-residue polypeptide: mRNA decay activator protein ZFP36L2-B (364 aa).

Over residues 102-111 the composition is skewed to basic and acidic residues; the sequence is SFSENGERSQ. Residues 102 to 129 form a disordered region; it reads SFSENGERSQHLLHLQQQQQQQKAGAQV. Residues 113–123 show a composition bias toward low complexity; that stretch reads LLHLQQQQQQQ. An RNA-binding motif is present at residues 133-138; that stretch reads RYKTEL. 2 C3H1-type zinc fingers span residues 133-161 and 171-199; these read RYKT…HGFH and KYKT…HNAE. Residues 150–191 are RNA-binding; sequence YGEKCQFAHGFHELRSLTRHPKYKTELCRTFHTIGFCPYGPR. The tract at residues 308-350 is disordered; the sequence is SESPVFDAPPSPPDSLSDRDSYLSGSLSSGSLSGSDSPTLDSN. Residues 329–348 show a composition bias toward low complexity; that stretch reads YLSGSLSSGSLSGSDSPTLD.

Phosphorylated. In terms of tissue distribution, remains unlocalized in the egg and early embryo. From stage 21 (late neurula), expressed around the pronephros in the anterior crests, pharyngeal arch, hindbrain, mesodermal tissues around the pronephros and tail-bud. This expression pattern is maintained up to the tadpole stage.

The protein localises to the nucleus. Its subcellular location is the cytoplasm. In terms of biological role, zinc-finger RNA-binding protein that destabilizes several cytoplasmic AU-rich element (ARE)-containing mRNA transcripts by promoting their poly(A) tail removal or deadenylation, and hence provide a mechanism for attenuating protein synthesis. Acts as a 3'-untranslated region (UTR) ARE mRNA-binding adapter protein to communicate signaling events to the mRNA decay machinery. Functions by recruiting the CCR4-NOT deadenylase complex and probably other components of the cytoplasmic RNA decay machinery to the bound ARE-containing mRNAs, and hence promotes ARE-mediated mRNA deadenylation and decay processes. Binds to 3'-UTR ARE of numerous mRNAs. Also induces the degradation of ARE-containing mRNAs even in absence of poly(A) tail. Required for tubulogenesis during pronephros development. The sequence is that of mRNA decay activator protein ZFP36L2-B (zfp36l2-B) from Xenopus laevis (African clawed frog).